The primary structure comprises 453 residues: tRNA-2-methylthio-N(6)-dimethylallyladenosine synthase (453 aa).

Residues 11-131 (KSFHVKSFGC…LPQLVADAAE (121 aa)) enclose the MTTase N-terminal domain. [4Fe-4S] cluster-binding residues include Cys-20, Cys-56, Cys-94, Cys-167, Cys-171, and Cys-174. One can recognise a Radical SAM core domain in the interval 153–385 (RRQGPTAFLT…QALLNEQQHR (233 aa)). The 62-residue stretch at 388 to 449 (LATVGKRCEV…PNSLSGALVE (62 aa)) folds into the TRAM domain.

This sequence belongs to the methylthiotransferase family. MiaB subfamily. As to quaternary structure, monomer. [4Fe-4S] cluster is required as a cofactor.

It localises to the cytoplasm. The enzyme catalyses N(6)-dimethylallyladenosine(37) in tRNA + (sulfur carrier)-SH + AH2 + 2 S-adenosyl-L-methionine = 2-methylsulfanyl-N(6)-dimethylallyladenosine(37) in tRNA + (sulfur carrier)-H + 5'-deoxyadenosine + L-methionine + A + S-adenosyl-L-homocysteine + 2 H(+). In terms of biological role, catalyzes the methylthiolation of N6-(dimethylallyl)adenosine (i(6)A), leading to the formation of 2-methylthio-N6-(dimethylallyl)adenosine (ms(2)i(6)A) at position 37 in tRNAs that read codons beginning with uridine. The chain is tRNA-2-methylthio-N(6)-dimethylallyladenosine synthase from Rhizorhabdus wittichii (strain DSM 6014 / CCUG 31198 / JCM 15750 / NBRC 105917 / EY 4224 / RW1) (Sphingomonas wittichii).